Here is a 1299-residue protein sequence, read N- to C-terminus: Cilia- and flagella-associated protein 251 (1299 aa).

Residues 1–351 (MSDTEENPLE…SQKPEDILAQ (351 aa)) form a disordered region. Composition is skewed to acidic residues over residues 17–45 (EMEE…EEEE), 91–162 (EKEE…EEDA), and 176–189 (ESQE…EWVE). The span at 190-199 (KEEQREGEEV) shows a compositional bias: basic and acidic residues. Over residues 212 to 228 (EEEGWEEEKSGEEEKSE) the composition is skewed to acidic residues. The segment covering 229–257 (ESERSKERGGEEEGQEKEEAEHEGEREEG) has biased composition (basic and acidic residues). A compositionally biased stretch (acidic residues) spans 269-280 (REEEEEEEDTET). 2 stretches are compositionally biased toward basic and acidic residues: residues 281–297 (TETK…EKQN) and 331–351 (NSMK…ILAQ). WD repeat units follow at residues 484–526 (PVHT…IWKW), 534–574 (ACTL…CWFE), 585–624 (VLTE…VWDI), 643–678 (PRKL…FYDH), 681–741 (SVVN…VYHM), 745–785 (GTKL…VWDF), 791–828 (LFSR…ILDA), 838–874 (PFKY…MVVV), 881–924 (WEYL…EYNL), 935–975 (LDVH…LFNA), 981–1027 (RKTL…ILPV), 1033–1071 (KTCA…QWKI), 1109–1149 (YFYY…FYPS), and 1169–1209 (GKLI…GYTN).

The protein localises to the cytoplasm. Its subcellular location is the cytoskeleton. It is found in the cilium axoneme. It localises to the cell projection. The protein resides in the cilium. The protein localises to the flagellum. In terms of biological role, involved in spermatozoa motility. May also regulate cilium motility through its role in the assembly of the axonemal radial spokes. This Mus musculus (Mouse) protein is Cilia- and flagella-associated protein 251.